A 191-amino-acid chain; its full sequence is dCTP deaminase, dUMP-forming (191 aa).

DCTP-binding positions include 101–106, Asp119, 127–129, Gln148, Tyr162, and Gln174; these read KSSLGR and TLE. Glu129 acts as the Proton donor/acceptor in catalysis. A disordered region spans residues 163 to 191; it reads GSPVYGSRYQGQRGPTPSRSWQNFHRTKI. Residues 171–191 show a composition bias toward polar residues; that stretch reads YQGQRGPTPSRSWQNFHRTKI.

This sequence belongs to the dCTP deaminase family. Homotrimer.

The enzyme catalyses dCTP + 2 H2O = dUMP + NH4(+) + diphosphate. Its pathway is pyrimidine metabolism; dUMP biosynthesis; dUMP from dCTP: step 1/1. In terms of biological role, bifunctional enzyme that catalyzes both the deamination of dCTP to dUTP and the hydrolysis of dUTP to dUMP without releasing the toxic dUTP intermediate. This Acidothermus cellulolyticus (strain ATCC 43068 / DSM 8971 / 11B) protein is dCTP deaminase, dUMP-forming.